Here is a 261-residue protein sequence, read N- to C-terminus: Gap junction beta-6 protein (261 aa).

Topologically, residues 1–22 (MDWGTLHTFIGGVNKHSTSIGK) are cytoplasmic. A helical transmembrane segment spans residues 23–45 (VWITVIFIFRVMILVVAAQEVWG). Over 46-75 (DEQEDFVCNTLQPGCKNVCYDHFFPVSHIR) the chain is Extracellular. The chain crosses the membrane as a helical span at residues 76–98 (LWALQLIFVSTPALLVAMHVAYY). The Cytoplasmic portion of the chain corresponds to 99-131 (RHETTRKFRRGEKRNDFKDIEDIKKQKVRIEGS). The chain crosses the membrane as a helical span at residues 132–154 (LWWTYTSSIFFRIIFEAAFMYVF). Residues 155–192 (YFLYNGYHLPWVLKCGIDPCPNLVDCFISRPTEKTVFT) lie on the Extracellular side of the membrane. A helical transmembrane segment spans residues 193–215 (IFMISASVICMLLNVAELCYLLL). Residues 216 to 261 (KVCFRRSKRAQTQKNHPNHALKESKQNEMNELISDSGQNAITGFPS) are Cytoplasmic-facing.

It belongs to the connexin family. Beta-type (group I) subfamily. In terms of assembly, a connexon is composed of a hexamer of connexins. Interacts with CNST.

The protein resides in the cell membrane. The protein localises to the cell junction. It localises to the gap junction. In terms of biological role, one gap junction consists of a cluster of closely packed pairs of transmembrane channels, the connexons, through which materials of low MW diffuse from one cell to a neighboring cell. In Homo sapiens (Human), this protein is Gap junction beta-6 protein (GJB6).